The following is a 519-amino-acid chain: Galactokinase (519 aa).

Alpha-D-galactose-binding residues include Arg47, Glu53, His54, and Asp56. Gly159, Gly161, Ser163, and Ser164 together coordinate ATP. Position 209 (Asp209) interacts with alpha-D-galactose. Asp209 acts as the Proton acceptor in catalysis. ATP contacts are provided by Asn257 and Lys258. Tyr266 is an alpha-D-galactose binding site.

Belongs to the GHMP kinase family. GalK subfamily.

It catalyses the reaction alpha-D-galactose + ATP = alpha-D-galactose 1-phosphate + ADP + H(+). It participates in carbohydrate metabolism; galactose metabolism. In terms of biological role, galactokinase is a key enzyme in the galactose metabolism where it catalyzes the conversion of alpha-D-galactose to galactose 1-phosphate. Can also induce the transcription of the gal genes in response to the organism being challenged with galactose as the sole source of carbon. In Schizosaccharomyces pombe (strain 972 / ATCC 24843) (Fission yeast), this protein is Galactokinase (gal1).